The primary structure comprises 536 residues: uncharacterized protein (536 aa).

Disordered stretches follow at residues 1 to 76 (MSFT…SPAS) and 204 to 237 (NWNS…SNKS). Low complexity-rich tracts occupy residues 7–76 (TSSV…SPAS) and 204–234 (NWNS…PSKS). Residues 247-267 (CSVAIPVGVVLILIGLGIFLW) traverse the membrane as a helical segment. Disordered stretches follow at residues 287–354 (YGFN…LLGG) and 373–536 (DASD…LNLF). Polar residues predominate over residues 290 to 326 (NPNQPSNFRSPNRAPSTNNRYRGWNGSPTPAAGNNTN). Residues 327–350 (GRPVAPRPSAGAGGANPPAASQPG) show a composition bias toward low complexity. Residues 351-371 (LLGGSSNSAGPIAAATAAGVG) traverse the membrane as a helical segment. Residues 403-424 (SASNEAEATMPPSNGSNFSEGL) are compositionally biased toward polar residues. Positions 430–454 (ESGPAVGAAGAAAEAAEHSGSGSDS) are enriched in low complexity. A compositionally biased stretch (polar residues) spans 480–509 (SYGSRAALSSRSQSNLLSPTSTGASNQPNY). Residues 517–527 (SSSNVSIPRSS) show a composition bias toward low complexity.

It is found in the membrane. This is an uncharacterized protein from Schizosaccharomyces pombe (strain 972 / ATCC 24843) (Fission yeast).